Here is a 30-residue protein sequence, read N- to C-terminus: Serum amyloid P-component (30 aa).

Positions 1–30 (APQDLSGKMFIFPQETSTANVXLTARSQDF) constitute a Pentraxin (PTX) domain.

Belongs to the pentraxin family. In terms of assembly, homopentamer. Discoid arrangement of 5 covalently bound subunits. Ca(2+) is required as a cofactor.

It localises to the secreted. The chain is Serum amyloid P-component from Anarhichas lupus (Atlantic wolffish).